Reading from the N-terminus, the 276-residue chain is Carbonic anhydrase Nec1 (276 aa).

Residues M1 to A27 form the signal peptide. Residues R34–C270 enclose the Alpha-carbonic anhydrase domain. Cysteines 59 and 220 form a disulfide. The active-site Proton acceptor is H98. Zn(2+) is bound by residues H124 and H126. N134 carries an N-linked (GlcNAc...) asparagine glycan. Zn(2+) is bound at residue H143. Residues T216–T217 form a substrate binding region.

Belongs to the alpha-class carbonic anhydrase family. Homodimer. Zn(2+) serves as cofactor. As to expression, confined to nectaries.

It carries out the reaction hydrogencarbonate + H(+) = CO2 + H2O. Its pathway is one-carbon metabolism. Functionally, involved in the production of blood-red nectar containing the alkaloid nesocodin and that serves as a visual attractant for pollinator visitation, including vertebrates such as Phelsuma geckos. The nectar is initially acidic and pale yellow, but slowly becomes alkaline before turning into red within 24 hours. Together with NEC2 and NEC3, facilitates the condensation of sinapaldehyde ((E)-3,5-dimethoxy-4-hydroxycinnamaldehyde) and proline to form nesocodin, a pigment with a stable imine bond. Mediates the alkalinization (pH increase) of the flower nectar by catalyzing the reversible hydration of carbon dioxide. The chain is Carbonic anhydrase Nec1 from Nesocodon mauritianus (Blue Mauritius bellflower).